The following is a 299-amino-acid chain: Transcription elongation factor A protein 2 (299 aa).

The region spanning E6–S83 is the TFIIS N-terminal domain. Residue K58 forms a Glycyl lysine isopeptide (Lys-Gly) (interchain with G-Cter in ubiquitin) linkage. Phosphoserine is present on residues S60 and S100. Residues K86–F128 form a disordered region. Over residues D102 to L116 the composition is skewed to basic and acidic residues. A TFIIS central domain is found at V138 to T254. A TFIIS-type zinc finger spans residues D257 to K297. Zn(2+)-binding residues include C261, C264, C289, and C292.

The protein belongs to the TFS-II family. Interacts with the basal transcription factor GTF2B. Interacts with REXO1. As to expression, testis and ovary specific.

The protein localises to the nucleus. Its function is as follows. Necessary for efficient RNA polymerase II transcription elongation past template-encoded arresting sites. The arresting sites in DNA have the property of trapping a certain fraction of elongating RNA polymerases that pass through, resulting in locked ternary complexes. Cleavage of the nascent transcript by S-II allows the resumption of elongation from the new 3'-terminus. This chain is Transcription elongation factor A protein 2 (TCEA2), found in Homo sapiens (Human).